The chain runs to 393 residues: Lipid-A-disaccharide synthase (393 aa).

The protein belongs to the LpxB family.

The catalysed reaction is a lipid X + a UDP-2-N,3-O-bis[(3R)-3-hydroxyacyl]-alpha-D-glucosamine = a lipid A disaccharide + UDP + H(+). It participates in bacterial outer membrane biogenesis; LPS lipid A biosynthesis. Condensation of UDP-2,3-diacylglucosamine and 2,3-diacylglucosamine-1-phosphate to form lipid A disaccharide, a precursor of lipid A, a phosphorylated glycolipid that anchors the lipopolysaccharide to the outer membrane of the cell. The chain is Lipid-A-disaccharide synthase from Rhodopseudomonas palustris (strain HaA2).